The primary structure comprises 281 residues: Small ribosomal subunit protein uS2 (281 aa).

The segment at Leu-225–Glu-281 is disordered. Basic residues predominate over residues Arg-245–Ser-256. Low complexity predominate over residues Glu-262–Ala-272.

Belongs to the universal ribosomal protein uS2 family.

This chain is Small ribosomal subunit protein uS2, found in Porphyromonas gingivalis (strain ATCC 33277 / DSM 20709 / CIP 103683 / JCM 12257 / NCTC 11834 / 2561).